We begin with the raw amino-acid sequence, 75 residues long: DNA-directed RNA polymerase subunit omega (75 aa).

This sequence belongs to the RNA polymerase subunit omega family. In cyanobacteria the RNAP catalytic core is composed of 2 alpha, 1 beta, 1 beta', 1 gamma and 1 omega subunit. When a sigma factor is associated with the core the holoenzyme is formed, which can initiate transcription.

It catalyses the reaction RNA(n) + a ribonucleoside 5'-triphosphate = RNA(n+1) + diphosphate. Functionally, promotes RNA polymerase assembly. Latches the N- and C-terminal regions of the beta' subunit thereby facilitating its interaction with the beta and alpha subunits. The chain is DNA-directed RNA polymerase subunit omega from Gloeothece citriformis (strain PCC 7424) (Cyanothece sp. (strain PCC 7424)).